The chain runs to 352 residues: Histidine biosynthesis bifunctional protein HisB (352 aa).

A histidinol-phosphatase region spans residues 1–163 (MKKILFIDRD…MVASAIINDA (163 aa)). The Nucleophile role is filled by aspartate 8. 2 residues coordinate Mg(2+): aspartate 8 and aspartate 10. Aspartate 10 acts as the Proton donor in catalysis. Zn(2+) is bound by residues cysteine 91, histidine 93, cysteine 99, and cysteine 101. Aspartate 128 lines the Mg(2+) pocket. The interval 164–352 (RKASVQRKTK…NYLPSTKGVL (189 aa)) is imidazoleglycerol-phosphate dehydratase.

It in the N-terminal section; belongs to the histidinol-phosphatase family. In the C-terminal section; belongs to the imidazoleglycerol-phosphate dehydratase family. Requires Mg(2+) as cofactor. Zn(2+) serves as cofactor.

The protein resides in the cytoplasm. The enzyme catalyses D-erythro-1-(imidazol-4-yl)glycerol 3-phosphate = 3-(imidazol-4-yl)-2-oxopropyl phosphate + H2O. It catalyses the reaction L-histidinol phosphate + H2O = L-histidinol + phosphate. It participates in amino-acid biosynthesis; L-histidine biosynthesis; L-histidine from 5-phospho-alpha-D-ribose 1-diphosphate: step 6/9. The protein operates within amino-acid biosynthesis; L-histidine biosynthesis; L-histidine from 5-phospho-alpha-D-ribose 1-diphosphate: step 8/9. The protein is Histidine biosynthesis bifunctional protein HisB of Legionella pneumophila subsp. pneumophila (strain Philadelphia 1 / ATCC 33152 / DSM 7513).